A 63-amino-acid chain; its full sequence is Large ribosomal subunit protein bL28 (63 aa).

It belongs to the bacterial ribosomal protein bL28 family.

The polypeptide is Large ribosomal subunit protein bL28 (Hydrogenobaculum sp. (strain Y04AAS1)).